An 87-amino-acid polypeptide reads, in one-letter code: Small ribosomal subunit protein uS17 (87 aa).

It belongs to the universal ribosomal protein uS17 family. As to quaternary structure, part of the 30S ribosomal subunit.

One of the primary rRNA binding proteins, it binds specifically to the 5'-end of 16S ribosomal RNA. This chain is Small ribosomal subunit protein uS17, found in Staphylococcus aureus (strain JH1).